A 781-amino-acid chain; its full sequence is Beta-mannosyltransferase 4 (781 aa).

Over 1-17 the chain is Cytoplasmic; the sequence is MTKSYMPLFRSPRQFKK. The helical transmembrane segment at 18-38 threads the bilayer; that stretch reads IYFILIPLILAVIILHVFFDG. Topologically, residues 39–781 are extracellular; the sequence is FNKISEYSPT…EKEDDDDIEV (743 aa). Residues 640–733 are a coiled coil; sequence KLGDSEAAIK…AKDEDKNEDE (94 aa). 2 stretches are compositionally biased toward basic and acidic residues: residues 663 to 728 and 736 to 750; these read KAEK…KDED and KEKNDESGLTEKSEV. The disordered stretch occupies residues 663–781; sequence KAEKEKAEKE…EKEDDDDIEV (119 aa). A compositionally biased stretch (acidic residues) spans 751 to 781; that stretch reads EENGENTNEGGEDDGDGDGEEEKEDDDDIEV.

This sequence belongs to the BMT family.

Its subcellular location is the membrane. Functionally, beta-mannosyltransferase involved in cell wall biosynthesis. Required for the elongation of beta-mannose chains on the acid-labile fraction of cell wall phosphopeptidomannan. This chain is Beta-mannosyltransferase 4 (BMT4), found in Candida albicans (strain SC5314 / ATCC MYA-2876) (Yeast).